Consider the following 145-residue polypeptide: Monooxygenase AacuP (145 aa).

Belongs to the avfA family.

It functions in the pathway secondary metabolite biosynthesis. Its function is as follows. Monooxygenase; part of the gene cluster that mediates the biosynthesis of the tetrahydroxanthone dimer secalonic acid D. The pathway begins with the synthesis of atrochrysone thioester by the polyketide synthase AacuL. The atrochrysone carboxyl ACP thioesterase AacuM then breaks the thioester bond and releases the atrochrysone carboxylic acid from AacuL. Atrochrysone carboxylic acid is decarboxylated by the decarboxylase AacuI, and oxidized by the anthrone oxygenase AacuG to yield emodin. Emodin is then reduced to emodin hydroquinone by a yet unidentified oxidoreductase. A-ring reduction by the short chain dehydrogenase AacuN, dehydration by the scytalone dehydratase-like protein AacuK and probable spontaneous re-oxidation, results in overall deoxygenation to chrysophanol. Baeyer-Villiger oxidation by the Baeyer-Villiger monooxygenase (BVMO) AacuH then yields monodictyphenone. Monodictyphenone is transformed into compounds with the tetrahydroxanthone skeleton via methylesterification by the methyltransferase AacuQ, followed by the action of the flavin-dependent monooxygenase AacuC, the isomerase AacuP, and the short chain dehydrogenase/reductase AacuF or AacuD. AacuF and AacuD should accept the same compound as a substrate but perform the ketoreduction with a different stereoselectivity, thus yielding blennolides B and A, respectively. In the final step of the biosynthesis, the cytochrome P450 monooxygenase AacuE accepts blennolide B and/or blennolide A to conduct the dimerization reaction to furnish the tetrahydroxanthone dimers, secalonic acids D, B, and F. The protein is Monooxygenase AacuP of Aspergillus aculeatus (strain ATCC 16872 / CBS 172.66 / WB 5094).